A 54-amino-acid polypeptide reads, in one-letter code: Rubredoxin (54 aa).

The Rubredoxin-like domain maps to 1–54; sequence MKKYQCIVCGWIYDEAEGWPQDGIAPGTKWEDIPDDWTCPDCGVSKVDFEMIEV. Fe cation contacts are provided by C6, C9, C39, and C42.

The protein belongs to the rubredoxin family. Requires Fe(3+) as cofactor.

The protein localises to the cytoplasm. It functions in the pathway hydrocarbon metabolism; alkane degradation. Its function is as follows. Involved in the hydrocarbon hydroxylating system, which transfers electrons from NADH to rubredoxin reductase and then through rubredoxin to alkane 1 monooxygenase. This is Rubredoxin (rubA) from Acinetobacter baylyi (strain ATCC 33305 / BD413 / ADP1).